A 340-amino-acid chain; its full sequence is Guanine nucleotide-binding protein G(I)/G(S)/G(T) subunit beta-1 (340 aa).

An N-acetylserine modification is found at Ser2. At Ser2 the chain carries Phosphoserine. WD repeat units lie at residues 46–94, 95–140, 141–181, 182–223, 224–267, 268–309, and 310–340; these read RTRR…HAIP, LRSS…RELA, GHTG…TTFT, GHTG…QTFT, GHES…YSHD, NIIC…GVLA, and GHDDRVSCLGVTDDGMAVATGSWDSFLKIWN. His266 bears the Phosphohistidine mark.

Belongs to the WD repeat G protein beta family. G proteins are composed of 3 units, alpha, beta and gamma. The heterodimer formed by GNB1 and GNG2 interacts with ARHGEF5. The heterodimer formed by GNB1 and GNG2 interacts with GRK2. Forms a complex with GNAO1 and GNG3. Interacts with ARHGEF18 and RASD2. Forms complexes with TAS2R14 and G-proteins; these complexes play a role in the perception of bitterness. Component of the TAS2R14-GNAI1 complex, consisting of TAS2R14, GNAI1, GNB1 and GNG2. Component of the TAS2R14-GNAT3 complex, consisting of TAS2R14, GNAT3, GNB1 and GNG2. Component of the TAS2R14-GNAS2 complex, consisting of TAS2R14, GNAS2, GNB1 and GNG2. In terms of processing, phosphorylation at His-266 by NDKB contributes to G protein activation by increasing the high energetic phosphate transfer onto GDP.

In terms of biological role, guanine nucleotide-binding proteins (G proteins) are involved as a modulator or transducer in various transmembrane signaling systems. The beta and gamma chains are required for the GTPase activity, for replacement of GDP by GTP, and for G protein-effector interaction. The sequence is that of Guanine nucleotide-binding protein G(I)/G(S)/G(T) subunit beta-1 (GNB1) from Pongo abelii (Sumatran orangutan).